The sequence spans 188 residues: dCTP deaminase (188 aa).

109 to 114 provides a ligand contact to dCTP; it reads KSTYAR. Catalysis depends on Glu135, which acts as the Proton donor/acceptor. The dCTP site is built by Gln154, Tyr168, and Gln178.

It belongs to the dCTP deaminase family. Homotrimer.

It carries out the reaction dCTP + H2O + H(+) = dUTP + NH4(+). It functions in the pathway pyrimidine metabolism; dUMP biosynthesis; dUMP from dCTP (dUTP route): step 1/2. Its function is as follows. Catalyzes the deamination of dCTP to dUTP. The sequence is that of dCTP deaminase from Helicobacter pylori (strain J99 / ATCC 700824) (Campylobacter pylori J99).